Consider the following 463-residue polypeptide: uncharacterized protein (463 aa).

Residues V9–K67 enclose the TRAM domain. [4Fe-4S] cluster contacts are provided by C80, C86, C89, and C169. S-adenosyl-L-methionine is bound by residues Q293, Y322, D343, and D391. C418 (nucleophile) is an active-site residue.

This sequence belongs to the class I-like SAM-binding methyltransferase superfamily. RNA M5U methyltransferase family.

This is an uncharacterized protein from Halalkalibacterium halodurans (strain ATCC BAA-125 / DSM 18197 / FERM 7344 / JCM 9153 / C-125) (Bacillus halodurans).